A 508-amino-acid polypeptide reads, in one-letter code: Ribose import ATP-binding protein RbsA 2 (508 aa).

ABC transporter domains follow at residues 6 to 241 (LTIH…VGRE) and 254 to 499 (ERSG…SGMG). 38-45 (GENGAGKS) serves as a coordination point for ATP.

This sequence belongs to the ABC transporter superfamily. Ribose importer (TC 3.A.1.2.1) family. As to quaternary structure, the complex is composed of an ATP-binding protein (RbsA), two transmembrane proteins (RbsC) and a solute-binding protein (RbsB).

It localises to the cell inner membrane. It catalyses the reaction D-ribose(out) + ATP + H2O = D-ribose(in) + ADP + phosphate + H(+). In terms of biological role, part of the ABC transporter complex RbsABC involved in ribose import. Responsible for energy coupling to the transport system. This chain is Ribose import ATP-binding protein RbsA 2, found in Rhizobium etli (strain ATCC 51251 / DSM 11541 / JCM 21823 / NBRC 15573 / CFN 42).